The primary structure comprises 487 residues: UDP-N-acetylmuramate--L-alanine ligase (487 aa).

129 to 135 (GTHGKTT) provides a ligand contact to ATP.

Belongs to the MurCDEF family.

The protein resides in the cytoplasm. It carries out the reaction UDP-N-acetyl-alpha-D-muramate + L-alanine + ATP = UDP-N-acetyl-alpha-D-muramoyl-L-alanine + ADP + phosphate + H(+). It functions in the pathway cell wall biogenesis; peptidoglycan biosynthesis. In terms of biological role, cell wall formation. The chain is UDP-N-acetylmuramate--L-alanine ligase from Aliivibrio salmonicida (strain LFI1238) (Vibrio salmonicida (strain LFI1238)).